The chain runs to 216 residues: U1 small nuclear ribonucleoprotein C (216 aa).

Residues 4 to 36 (FFCDYCDVYLTHDSMSVRKAHNAGRNHLRNVVE) form a Matrin-type zinc finger. Composition is skewed to pro residues over residues 68-80 (AMAP…PPFG), 87-198 (QLPP…PAPP), and 206-216 (PGPPPGLSEKR). Residues 68–216 (AMAPPGAFPP…GPPPGLSEKR (149 aa)) are disordered.

The protein belongs to the U1 small nuclear ribonucleoprotein C family. As to quaternary structure, U1 snRNP is composed of the 7 core Sm proteins B/B', D1, D2, D3, E, F and G that assemble in a heptameric protein ring on the Sm site of the small nuclear RNA to form the core snRNP, and at least 3 U1 snRNP-specific proteins U1-70K, U1-A and U1-C. U1-C interacts with U1 snRNA and the 5' splice-site region of the pre-mRNA.

It is found in the nucleus. Its function is as follows. Component of the spliceosomal U1 snRNP, which is essential for recognition of the pre-mRNA 5' splice-site and the subsequent assembly of the spliceosome. U1-C is directly involved in initial 5' splice-site recognition for both constitutive and regulated alternative splicing. The interaction with the 5' splice-site seems to precede base-pairing between the pre-mRNA and the U1 snRNA. Stimulates commitment or early (E) complex formation by stabilizing the base pairing of the 5' end of the U1 snRNA and the 5' splice-site region. This Aspergillus fumigatus (strain ATCC MYA-4609 / CBS 101355 / FGSC A1100 / Af293) (Neosartorya fumigata) protein is U1 small nuclear ribonucleoprotein C.